We begin with the raw amino-acid sequence, 339 residues long: NADPH dehydrogenase (339 aa).

Pro-21–Cys-24 lines the FMN pocket. Tyr-26 is a substrate binding site. Residues Ala-57 and Gln-99 each coordinate FMN. A substrate-binding site is contributed by His-162–His-165. Residues Arg-215 and Gly-307 to Arg-308 contribute to the FMN site.

Belongs to the NADH:flavin oxidoreductase/NADH oxidase family. NamA subfamily. As to quaternary structure, homotetramer. Requires FMN as cofactor.

The enzyme catalyses A + NADPH + H(+) = AH2 + NADP(+). Functionally, catalyzes the reduction of the double bond of an array of alpha,beta-unsaturated aldehydes and ketones. It also reduces the nitro group of nitroester and nitroaromatic compounds. It could have a role in detoxification processes. In Clostridium acetobutylicum (strain ATCC 824 / DSM 792 / JCM 1419 / IAM 19013 / LMG 5710 / NBRC 13948 / NRRL B-527 / VKM B-1787 / 2291 / W), this protein is NADPH dehydrogenase.